A 319-amino-acid chain; its full sequence is Tetrahydromethanopterin S-methyltransferase subunit H (319 aa).

The protein belongs to the MtrH family. As to quaternary structure, the complex is composed of 8 subunits; MtrA, MtrB, MtrC, MtrD, MtrE, MtrF, MtrG and MtrH.

The catalysed reaction is 5-methyl-5,6,7,8-tetrahydromethanopterin + coenzyme M + 2 Na(+)(in) = 5,6,7,8-tetrahydromethanopterin + methyl-coenzyme M + 2 Na(+)(out). It functions in the pathway one-carbon metabolism; methanogenesis from CO(2); methyl-coenzyme M from 5,10-methylene-5,6,7,8-tetrahydromethanopterin: step 2/2. Part of a complex that catalyzes the formation of methyl-coenzyme M and tetrahydromethanopterin from coenzyme M and methyl-tetrahydromethanopterin. This is an energy-conserving, sodium-ion translocating step. MtrH catalyzes the transfer of the methyl group from methyl-tetrahydromethanopterin to the corrinoid prosthetic group of MtrA. The protein is Tetrahydromethanopterin S-methyltransferase subunit H of Methanococcus maripaludis (strain DSM 14266 / JCM 13030 / NBRC 101832 / S2 / LL).